Here is a 160-residue protein sequence, read N- to C-terminus: Transcription elongation factor GreA (160 aa).

Positions 14–76 (VKKLEEELEY…QLENMLKNAS (63 aa)) form a coiled coil.

The protein belongs to the GreA/GreB family.

Necessary for efficient RNA polymerase transcription elongation past template-encoded arresting sites. The arresting sites in DNA have the property of trapping a certain fraction of elongating RNA polymerases that pass through, resulting in locked ternary complexes. Cleavage of the nascent transcript by cleavage factors such as GreA or GreB allows the resumption of elongation from the new 3'terminus. GreA releases sequences of 2 to 3 nucleotides. The sequence is that of Transcription elongation factor GreA from Clostridium botulinum (strain Okra / Type B1).